A 211-amino-acid chain; its full sequence is WUSCHEL-related homeobox 14 (211 aa).

The homeobox; WUS-type DNA-binding region spans Ser91–Gln155. The segment at Arg147 to Gly183 is disordered.

Belongs to the WUS homeobox family. As to expression, expressed in root vasculature, pericycle and stamen. Expressed in the procambium during stem maturation.

It is found in the nucleus. In terms of biological role, acts redundantly with WOX4 downstream of the TDR/PXY receptor kinase to regulate procambial cell proliferation and differentiation in vascular tissue, independently of any role in vascular. Involved in the regulation of gibberellin (GA) biosynthesis pathway. Positively regulates the expression of the GA biosynthesis gene GA3OX1, and negatively regulates the expression of GA2OX1 during secondary growth, which increases bioactive GA content in the inflorescence stem. Promotes vascular cell differentiation in the inflorescence stem. Transcription factor which may be involved in developmental processes. The sequence is that of WUSCHEL-related homeobox 14 (WOX14) from Arabidopsis thaliana (Mouse-ear cress).